A 1025-amino-acid polypeptide reads, in one-letter code: DNA ligase 4 (1025 aa).

The interval 1–36 is disordered; that stretch reads MMQPTPAPSSAPGSPQRTQAEPEMETPSYPQPPQNV. ATP is bound by residues glutamate 289, lysine 291, leucine 292, arginine 296, glutamate 349, phenylalanine 387, glutamate 447, lysine 452, lysine 469, and lysine 471. Lysine 291 acts as the N6-AMP-lysine intermediate in catalysis. Glutamate 349 provides a ligand contact to Mg(2+). Glutamate 447 contacts Mg(2+). In terms of domain architecture, BRCT 1 spans 667–763; sequence VKTDIFNGMK…EPAPFKKKYF (97 aa). Positions 773 to 904 are disordered; it reads ADEYNEDDGE…TTPDVDGDVK (132 aa). Acidic residues-rich tracts occupy residues 775 to 785 and 806 to 816; these read EYNEDDGEEEG and SETEDEDEEQA. Residues 817–838 are compositionally biased toward basic and acidic residues; sequence PEIKEEQDGELHEWLKVDDRKS. A compositionally biased stretch (acidic residues) spans 845 to 870; sequence DEEDSVTEDDSDNADVADEEEPDLDD. Basic and acidic residues predominate over residues 891–904; sequence RHRETTPDVDGDVK. The region spanning 915–1025 is the BRCT 2 domain; the sequence is DPDVIFKHLC…TLLDEEGESF (111 aa).

It belongs to the ATP-dependent DNA ligase family. It depends on Mg(2+) as a cofactor.

It is found in the nucleus. It carries out the reaction ATP + (deoxyribonucleotide)n-3'-hydroxyl + 5'-phospho-(deoxyribonucleotide)m = (deoxyribonucleotide)n+m + AMP + diphosphate.. In terms of biological role, DNA ligase involved in DNA non-homologous end joining (NHEJ); required for double-strand break (DSB) repair. In Coprinopsis cinerea (strain Okayama-7 / 130 / ATCC MYA-4618 / FGSC 9003) (Inky cap fungus), this protein is DNA ligase 4 (LIG4).